A 651-amino-acid polypeptide reads, in one-letter code: MQRFKISSEFNPSGDQPGAIDSLVRGISCGAKEQTLLGVTGSGKTFTMASVIEQTQRPAIIIAHNKTLAAQLHEEMRSFFPENAVEYFVSYYDYYQPEAYIPQSDVYIEKDALINDKIDLLRHSATRSLLERRDVVVVASVSCIYGLGSPELYSEMTVPIALGMKLDMCQLQERLVELQYKHGNRYERGSFSVQGDVLSVFPSHYEDRIWKISFFGDEVDSIQEVDPKSGMVTLKLEKIKIFPNSHYVTPRPTLLQAISEIEKELDECALQFKQCNKIVEADRIVERTRFDIEMMRETGTCKGIENYSRYLCGKEAGDPPNTLLDYLPQDAIMFIDESHMTVPQIRAMYNGDRMRKANLINHGFRMPSALDNRPLTFAEWEDRKPTVVYVSATPGQYELQQTGGVATEQLIRPTGLLDPVCIVKGADGQIHDVMCESQATIARGYRVLITTLTKKMAENLTEYMREMGIKVAYLHSDVKTLERIEIISDLRLGVIDVLVGVNLMREGLDIPECALVGILDADKEGFLRSTTSLIQTIGRAARNVEGRVILYANVITKSMRTAMEETDRRRDIQRKYNQEHSIVPRTIQKPVQTSLSERVGSSRKKVSRDTNTDPANRDIVELQKEMLLCAENLDFERAVEIRNEIKRLTAP.

The region spanning Arg25 to Leu178 is the Helicase ATP-binding domain. Position 38 to 45 (Gly38 to Thr45) interacts with ATP. A Beta-hairpin motif is present at residues Tyr91–Ile114. The region spanning Asp427 to Val591 is the Helicase C-terminal domain. The disordered stretch occupies residues Thr593 to Ala615. The UVR domain occupies Asn616–Pro651.

The protein belongs to the UvrB family. In terms of assembly, forms a heterotetramer with UvrA during the search for lesions. Interacts with UvrC in an incision complex.

It localises to the cytoplasm. The UvrABC repair system catalyzes the recognition and processing of DNA lesions. A damage recognition complex composed of 2 UvrA and 2 UvrB subunits scans DNA for abnormalities. Upon binding of the UvrA(2)B(2) complex to a putative damaged site, the DNA wraps around one UvrB monomer. DNA wrap is dependent on ATP binding by UvrB and probably causes local melting of the DNA helix, facilitating insertion of UvrB beta-hairpin between the DNA strands. Then UvrB probes one DNA strand for the presence of a lesion. If a lesion is found the UvrA subunits dissociate and the UvrB-DNA preincision complex is formed. This complex is subsequently bound by UvrC and the second UvrB is released. If no lesion is found, the DNA wraps around the other UvrB subunit that will check the other stand for damage. This is UvrABC system protein B from Anaplasma marginale (strain Florida).